The primary structure comprises 128 residues: UPF0102 protein PSPTO_4420 (128 aa).

Belongs to the UPF0102 family.

This Pseudomonas syringae pv. tomato (strain ATCC BAA-871 / DC3000) protein is UPF0102 protein PSPTO_4420.